Consider the following 299-residue polypeptide: Circadian clock oscillator protein KaiA (299 aa).

The KaiA N-terminal domain maps to methionine 1–leucine 169. Positions serine 3–serine 135 are psR domain, binds oxidized quinones. The flexible linker stretch occupies residues glycine 170–arginine 178. The 109-residue stretch at asparagine 179–arginine 287 folds into the KaiA C-terminal domain.

Homodimer. The KaiABC complex composition changes during the circadian cycle to control KaiC phosphorylation. Complexes KaiC(6), KaiA(2-4):KaiC(6), KaiB(6):KaiC(6) and KaiC(6):KaiB(6):KaiA(12) are among the most important forms, many form cooperatively. KaiA and CikA bind to the same region of the KaiB(fs) form and therefore compete.

Its function is as follows. Key component of the KaiABC oscillator complex, which constitutes the main circadian regulator in cyanobacteria. Complex composition changes during the circadian cycle to control KaiC phosphorylation. KaiA stimulates KaiC autophosphorylation, while KaiB sequesters KaiA, leading to KaiC autodephosphorylation. KaiA binding to the KaiC CII domain during the subjective day yields KaiA(2-4):KaiC(6) complexes which stimulate KaiC autophosphorylation. Phospho-Ser-431 KaiC accumulation triggers binding of KaiB during the subjective night to form the KaiB(6):KaiC(6) complex, leading to changes in the output regulators CikA and SasA. KaiB(6):KaiC(6) formation exposes a site for KaiA binding on KaiB that sequesters KaiA from KaiC's CII domain, making the KaiC(6):KaiB(6):KaiA(12) complex resulting in KaiC autodephosphorylation. Complete dephosphorylation of KaiC leads to dissociation of KaiA(2):KaiB(1), completing 1 cycle of the Kai oscillator. Binds oxidized quinones via the N-terminal PsR domain, allowing it to sense redox changes and possibly mediate clock input. This is Circadian clock oscillator protein KaiA from Picosynechococcus sp. (strain ATCC 27264 / PCC 7002 / PR-6) (Agmenellum quadruplicatum).